Consider the following 315-residue polypeptide: 4-hydroxy-3-methylbut-2-enyl diphosphate reductase (315 aa).

Cys12 is a [4Fe-4S] cluster binding site. Residues His43 and His81 each coordinate (2E)-4-hydroxy-3-methylbut-2-enyl diphosphate. Dimethylallyl diphosphate is bound by residues His43 and His81. His43 and His81 together coordinate isopentenyl diphosphate. Cys103 contributes to the [4Fe-4S] cluster binding site. His131 is a (2E)-4-hydroxy-3-methylbut-2-enyl diphosphate binding site. His131 contributes to the dimethylallyl diphosphate binding site. Residue His131 participates in isopentenyl diphosphate binding. The active-site Proton donor is the Glu133. Thr170 serves as a coordination point for (2E)-4-hydroxy-3-methylbut-2-enyl diphosphate. Cys198 lines the [4Fe-4S] cluster pocket. (2E)-4-hydroxy-3-methylbut-2-enyl diphosphate-binding residues include Ser226, Asn228, and Ser271. Residues Ser226, Asn228, and Ser271 each contribute to the dimethylallyl diphosphate site. Residues Ser226, Asn228, and Ser271 each contribute to the isopentenyl diphosphate site.

The protein belongs to the IspH family. [4Fe-4S] cluster is required as a cofactor.

It catalyses the reaction isopentenyl diphosphate + 2 oxidized [2Fe-2S]-[ferredoxin] + H2O = (2E)-4-hydroxy-3-methylbut-2-enyl diphosphate + 2 reduced [2Fe-2S]-[ferredoxin] + 2 H(+). The enzyme catalyses dimethylallyl diphosphate + 2 oxidized [2Fe-2S]-[ferredoxin] + H2O = (2E)-4-hydroxy-3-methylbut-2-enyl diphosphate + 2 reduced [2Fe-2S]-[ferredoxin] + 2 H(+). It functions in the pathway isoprenoid biosynthesis; dimethylallyl diphosphate biosynthesis; dimethylallyl diphosphate from (2E)-4-hydroxy-3-methylbutenyl diphosphate: step 1/1. The protein operates within isoprenoid biosynthesis; isopentenyl diphosphate biosynthesis via DXP pathway; isopentenyl diphosphate from 1-deoxy-D-xylulose 5-phosphate: step 6/6. Its function is as follows. Catalyzes the conversion of 1-hydroxy-2-methyl-2-(E)-butenyl 4-diphosphate (HMBPP) into a mixture of isopentenyl diphosphate (IPP) and dimethylallyl diphosphate (DMAPP). Acts in the terminal step of the DOXP/MEP pathway for isoprenoid precursor biosynthesis. This Geobacillus sp. (strain WCH70) protein is 4-hydroxy-3-methylbut-2-enyl diphosphate reductase.